The sequence spans 98 residues: Large ribosomal subunit protein eL30 (98 aa).

It belongs to the eukaryotic ribosomal protein eL30 family.

This is Large ribosomal subunit protein eL30 from Methanosphaera stadtmanae (strain ATCC 43021 / DSM 3091 / JCM 11832 / MCB-3).